The sequence spans 134 residues: Small ribosomal subunit protein uS8 (134 aa).

Belongs to the universal ribosomal protein uS8 family. In terms of assembly, part of the 30S ribosomal subunit. Contacts proteins S5 and S12.

Functionally, one of the primary rRNA binding proteins, it binds directly to 16S rRNA central domain where it helps coordinate assembly of the platform of the 30S subunit. This is Small ribosomal subunit protein uS8 from Thermosipho melanesiensis (strain DSM 12029 / CIP 104789 / BI429).